Consider the following 874-residue polypeptide: Alanine--tRNA ligase (874 aa).

Residues His-563, His-567, Cys-665, and His-669 each coordinate Zn(2+).

This sequence belongs to the class-II aminoacyl-tRNA synthetase family. Requires Zn(2+) as cofactor.

The protein resides in the cytoplasm. The enzyme catalyses tRNA(Ala) + L-alanine + ATP = L-alanyl-tRNA(Ala) + AMP + diphosphate. In terms of biological role, catalyzes the attachment of alanine to tRNA(Ala) in a two-step reaction: alanine is first activated by ATP to form Ala-AMP and then transferred to the acceptor end of tRNA(Ala). Also edits incorrectly charged Ser-tRNA(Ala) and Gly-tRNA(Ala) via its editing domain. This is Alanine--tRNA ligase from Haemophilus ducreyi (strain 35000HP / ATCC 700724).